Here is a 388-residue protein sequence, read N- to C-terminus: Succinate--CoA ligase [ADP-forming] subunit beta (388 aa).

The 236-residue stretch at 9-244 (KQLFARYGLP…QSQEDPREAQ (236 aa)) folds into the ATP-grasp domain. ATP is bound by residues Lys-46, 53-55 (GRG), Glu-99, Thr-102, and Glu-107. Positions 199 and 213 each coordinate Mg(2+). Residues Asn-264 and 321-323 (GIV) contribute to the substrate site.

It belongs to the succinate/malate CoA ligase beta subunit family. In terms of assembly, heterotetramer of two alpha and two beta subunits. Requires Mg(2+) as cofactor.

It catalyses the reaction succinate + ATP + CoA = succinyl-CoA + ADP + phosphate. The catalysed reaction is GTP + succinate + CoA = succinyl-CoA + GDP + phosphate. Its pathway is carbohydrate metabolism; tricarboxylic acid cycle; succinate from succinyl-CoA (ligase route): step 1/1. Succinyl-CoA synthetase functions in the citric acid cycle (TCA), coupling the hydrolysis of succinyl-CoA to the synthesis of either ATP or GTP and thus represents the only step of substrate-level phosphorylation in the TCA. The beta subunit provides nucleotide specificity of the enzyme and binds the substrate succinate, while the binding sites for coenzyme A and phosphate are found in the alpha subunit. This chain is Succinate--CoA ligase [ADP-forming] subunit beta, found in Salmonella arizonae (strain ATCC BAA-731 / CDC346-86 / RSK2980).